The primary structure comprises 158 residues: MNRICHIEIDQASPIPPTAEIEQERQVAIFDLLEENSFALPPREGKPPVEGPFRLTLAIREGRLVFDIRSQEDEKVGEFHLSLGPFRQVVKDYFQICESYFEAVKRLPPSQIEAIDMARRGIHNEGARVLKERLEGKAEVDIDTARRLFTLICVLHWG.

It belongs to the UPF0262 family.

This is UPF0262 protein Rsph17025_0594 from Cereibacter sphaeroides (strain ATCC 17025 / ATH 2.4.3) (Rhodobacter sphaeroides).